We begin with the raw amino-acid sequence, 349 residues long: Protein-glutamate methylesterase/protein-glutamine glutaminase (349 aa).

The 118-residue stretch at 5–122 folds into the Response regulatory domain; sequence RVLCVDDSAL…REGMLAYSEL (118 aa). Aspartate 56 carries the 4-aspartylphosphate modification. Positions 152–344 constitute a CheB-type methylesterase domain; that stretch reads LLSSEKLIAI…QRMLAQISSG (193 aa). Active-site residues include serine 164, histidine 190, and aspartate 286.

The protein belongs to the CheB family. Post-translationally, phosphorylated by CheA. Phosphorylation of the N-terminal regulatory domain activates the methylesterase activity.

The protein resides in the cytoplasm. The enzyme catalyses [protein]-L-glutamate 5-O-methyl ester + H2O = L-glutamyl-[protein] + methanol + H(+). It catalyses the reaction L-glutaminyl-[protein] + H2O = L-glutamyl-[protein] + NH4(+). Its function is as follows. Involved in chemotaxis. Part of a chemotaxis signal transduction system that modulates chemotaxis in response to various stimuli. Catalyzes the demethylation of specific methylglutamate residues introduced into the chemoreceptors (methyl-accepting chemotaxis proteins or MCP) by CheR. Also mediates the irreversible deamidation of specific glutamine residues to glutamic acid. The protein is Protein-glutamate methylesterase/protein-glutamine glutaminase of Yersinia pseudotuberculosis serotype I (strain IP32953).